Reading from the N-terminus, the 112-residue chain is Putative RNase TTE0752 (112 aa).

Active-site residues include arginine 74 and histidine 79. Positions 74 to 81 (RDKLIHEY) match the RX(4)HXY motif motif. An O-di-AMP-tyrosine modification is found at tyrosine 81.

The protein belongs to the HepT RNase toxin family. In terms of assembly, homodimer, probably forms a complex with cognate antitoxin TTE0751. Post-translationally, modified by cognate antitoxin TTE0751; probably at least 2 successive AMPylation events occur on Tyr-81.

Functionally, probable toxic component of a putative type VII toxin-antitoxin (TA) system, probably an RNase. Probably neutralized by cognate antitoxin TTE0751. Neutralization may be due to AMPylation by TTE0751. This chain is Putative RNase TTE0752, found in Caldanaerobacter subterraneus subsp. tengcongensis (strain DSM 15242 / JCM 11007 / NBRC 100824 / MB4) (Thermoanaerobacter tengcongensis).